Here is a 739-residue protein sequence, read N- to C-terminus: Oxysterol-binding protein-related protein 9 (739 aa).

The 98-residue stretch at 2–99 (ASIMEGPLSK…WIHALEETIL (98 aa)) folds into the PH domain. Disordered stretches follow at residues 220–292 (TQAS…SYSS) and 306–371 (SSTS…ESVE). Residues 249–259 (NLGSRQSPTPI) show a composition bias toward polar residues. Over residues 260–276 (STGSGQSAPSSSLTSPS) the composition is skewed to low complexity. Polar residues-rich tracts occupy residues 277 to 292 (HVNL…SYSS), 306 to 330 (SSTS…STGA), and 338 to 352 (TESL…TNEA).

It belongs to the OSBP family.

It carries out the reaction a 1,2-diacyl-sn-glycero-3-phospho-(1D-myo-inositol 4-phosphate)(out) + a 1,2-diacyl-sn-glycero-3-phospho-L-serine(in) = a 1,2-diacyl-sn-glycero-3-phospho-(1D-myo-inositol 4-phosphate)(in) + a 1,2-diacyl-sn-glycero-3-phospho-L-serine(out). Functionally, interacts with OSBPL11 to function as lipid transfer proteins. Together they form a heterodimer that localizes at the ER-trans-Golgi membrane contact sites, and exchanges phosphatidylserine (1,2-diacyl-sn-glycero-3-phospho-L-serine, PS) for phosphatidylinositol-4-phosphate (1,2-diacyl-sn-glycero-3-phospho-(1D-myo-inositol 4-phosphate), PI(4)P) between the two organelles, a step that is critical for sphingomyelin synthesis in the Golgi complex. The protein is Oxysterol-binding protein-related protein 9 (osbpl9) of Xenopus tropicalis (Western clawed frog).